The primary structure comprises 103 residues: Large ribosomal subunit protein uL24 (103 aa).

Belongs to the universal ribosomal protein uL24 family. Part of the 50S ribosomal subunit.

In terms of biological role, one of two assembly initiator proteins, it binds directly to the 5'-end of the 23S rRNA, where it nucleates assembly of the 50S subunit. Functionally, one of the proteins that surrounds the polypeptide exit tunnel on the outside of the subunit. This chain is Large ribosomal subunit protein uL24, found in Sinorhizobium fredii (strain NBRC 101917 / NGR234).